The following is a 318-amino-acid chain: D-alanine--D-alanine ligase B (318 aa).

The ATP-grasp domain maps to 116–311 (KQVWQSLGIP…FQQLVLAILA (196 aa)). 142–197 (STELGFPLIVKPAHEGSSIGMAKVNSTQELVAAWQDAAKYDSQVLVEQWIHGPEFT) is an ATP binding site. Residues D265, E278, and N280 each contribute to the Mg(2+) site.

It belongs to the D-alanine--D-alanine ligase family. Requires Mg(2+) as cofactor. Mn(2+) is required as a cofactor.

It is found in the cytoplasm. The catalysed reaction is 2 D-alanine + ATP = D-alanyl-D-alanine + ADP + phosphate + H(+). It participates in cell wall biogenesis; peptidoglycan biosynthesis. Functionally, cell wall formation. The protein is D-alanine--D-alanine ligase B of Pseudomonas putida (strain ATCC 47054 / DSM 6125 / CFBP 8728 / NCIMB 11950 / KT2440).